The primary structure comprises 332 residues: T-cell surface glycoprotein CD1c3 (332 aa).

Positions 1 to 17 (MLFLQFLFLDVVLGGSI) are cleaved as a signal peptide. The Extracellular segment spans residues 18 to 300 (TKNVVQENIS…IILYWGHGLS (283 aa)). Residues Asn25, Asn38, Asn75, and Asn146 are each glycosylated (N-linked (GlcNAc...) asparagine). Cystine bridges form between Cys120–Cys184 and Cys224–Cys279. The Ig-like domain occupies 205–292 (PEVWLSSSPN…HSSLRDQDII (88 aa)). A helical membrane pass occupies residues 301–321 (VILITFAVIVPLVLLIILVLL). The Cytoplasmic portion of the chain corresponds to 322–332 (CKKCCTYQGIP).

In terms of assembly, heterodimer with B2M (beta-2-microglobulin).

Its subcellular location is the cell membrane. It localises to the endosome membrane. Functionally, antigen-presenting protein that binds self and non-self lipid and glycolipid antigens and presents them to T-cell receptors on natural killer T-cells. This chain is T-cell surface glycoprotein CD1c3 (CD1C3), found in Cavia porcellus (Guinea pig).